A 115-amino-acid chain; its full sequence is NADH-ubiquinone oxidoreductase chain 3 (115 aa).

The next 3 helical transmembrane spans lie at 3-23 (LALA…ITFW), 55-75 (FFLV…LLPL), and 86-106 (LTIA…AYEW).

This sequence belongs to the complex I subunit 3 family. As to quaternary structure, core subunit of respiratory chain NADH dehydrogenase (Complex I) which is composed of 45 different subunits. Interacts with TMEM186. Interacts with TMEM242.

It localises to the mitochondrion inner membrane. It carries out the reaction a ubiquinone + NADH + 5 H(+)(in) = a ubiquinol + NAD(+) + 4 H(+)(out). Its function is as follows. Core subunit of the mitochondrial membrane respiratory chain NADH dehydrogenase (Complex I) which catalyzes electron transfer from NADH through the respiratory chain, using ubiquinone as an electron acceptor. Essential for the catalytic activity of complex I. The polypeptide is NADH-ubiquinone oxidoreductase chain 3 (Hylobates lar (Lar gibbon)).